We begin with the raw amino-acid sequence, 261 residues long: G patch domain-containing protein 11 (261 aa).

3 disordered regions span residues 1–67, 88–124, and 184–213; these read MEEE…LNEA, ALGKKGDGIVEPIPLNIKTGRSGIGHEEMKKRKAEEN, and EAWYWPKMNEQEADEEADEETEEDEDLVEE. 2 stretches are compositionally biased toward basic and acidic residues: residues 29 to 64 and 111 to 124; these read RVKECYEKEEKHKEANIKNRQQKLKDVEKEKRDTKL and IGHEEMKKRKAEEN. Residues 31 to 65 are a coiled coil; the sequence is KECYEKEEKHKEANIKNRQQKLKDVEKEKRDTKLN. One can recognise a G-patch domain in the interval 70-116; the sequence is NENKGFALLQKMGYKKGQALGKKGDGIVEPIPLNIKTGRSGIGHEEM. The stretch at 190–222 forms a coiled coil; the sequence is KMNEQEADEEADEETEEDEDLVEEELSTLEKLQ. The span at 194–213 shows a compositional bias: acidic residues; the sequence is QEADEEADEETEEDEDLVEE.

Belongs to the GPATCH11 family.

Its subcellular location is the chromosome. It is found in the centromere. The protein localises to the kinetochore. The sequence is that of G patch domain-containing protein 11 (gpatch11) from Xenopus tropicalis (Western clawed frog).